We begin with the raw amino-acid sequence, 684 residues long: ATP-dependent zinc metalloprotease FtsH (684 aa).

The Cytoplasmic portion of the chain corresponds to 1-21 (MENKNDMFNKTPKSGKPKMFR). A helical membrane pass occupies residues 22–42 (FNLYWMYGLIFIMLVALYMTN). The Periplasmic portion of the chain corresponds to 43–138 (DSSGTKELGW…QVRFEEGDDA (96 aa)). A helical transmembrane segment spans residues 139-159 (IWNFLVSFGPIILLIGVWMFL). Topologically, residues 160-684 (MRRMSGGTGA…TEENKTGKIA (525 aa)) are cytoplasmic. Residue 236–243 (GPPGTGKT) coordinates ATP. His459 is a binding site for Zn(2+). The active site involves Glu460. Positions 463 and 534 each coordinate Zn(2+). A compositionally biased stretch (basic and acidic residues) spans 647–662 (EKANGKNKENADKEAE). The disordered stretch occupies residues 647–684 (EKANGKNKENADKEAEADATTENVTDTPTEENKTGKIA).

This sequence in the central section; belongs to the AAA ATPase family. The protein in the C-terminal section; belongs to the peptidase M41 family. Homohexamer. Requires Zn(2+) as cofactor.

It is found in the cell inner membrane. Functionally, acts as a processive, ATP-dependent zinc metallopeptidase for both cytoplasmic and membrane proteins. Plays a role in the quality control of integral membrane proteins. This Parabacteroides distasonis (strain ATCC 8503 / DSM 20701 / CIP 104284 / JCM 5825 / NCTC 11152) protein is ATP-dependent zinc metalloprotease FtsH.